The primary structure comprises 511 residues: Glucans biosynthesis protein G (511 aa).

An N-terminal signal peptide occupies residues 1-22 (MMKMRWLSAAVMLTLYTSSSWA).

This sequence belongs to the OpgD/OpgG family.

Its subcellular location is the periplasm. Its pathway is glycan metabolism; osmoregulated periplasmic glucan (OPG) biosynthesis. In terms of biological role, involved in the biosynthesis of osmoregulated periplasmic glucans (OPGs). This chain is Glucans biosynthesis protein G, found in Escherichia coli O8 (strain IAI1).